A 209-amino-acid chain; its full sequence is B3 domain-containing protein At2g31420 (209 aa).

Positions 101–198 form a DNA-binding region, TF-B3; that stretch reads LSKLEKSDFL…KLCFALSSPT (98 aa).

It localises to the nucleus. The chain is B3 domain-containing protein At2g31420 from Arabidopsis thaliana (Mouse-ear cress).